Reading from the N-terminus, the 221-residue chain is Interleukin-12 subunit alpha (221 aa).

An N-terminal signal peptide occupies residues 1 to 25; sequence MCPLRSLLLISTLVLLHHLPHLSLG. 3 disulfide bridges follow: Cys-39–Cys-112, Cys-66–Cys-198, and Cys-87–Cys-125. Residue Asn-95 is glycosylated (N-linked (GlcNAc...) asparagine).

The protein belongs to the IL-6 superfamily. Heterodimer with IL12B; disulfide-linked. This heterodimer is known as interleukin IL-12. Heterodimer with EBI3/IL27B; not disulfide-linked. This heterodimer is known as interleukin IL-35. Interacts with NBR1; this interaction promotes IL-12 secretion.

Its subcellular location is the secreted. Heterodimerizes with IL12B to form the IL-12 cytokine or with EBI3/IL27B to form the IL-35 cytokine. IL-12 is primarily produced by professional antigen-presenting cells (APCs) such as B-cells and dendritic cells (DCs) as well as macrophages and granulocytes and regulates T-cell and natural killer-cell responses, induces the production of interferon-gamma (IFN-gamma), favors the differentiation of T-helper 1 (Th1) cells and is an important link between innate resistance and adaptive immunity. Mechanistically, exerts its biological effects through a receptor composed of IL12R1 and IL12R2 subunits. Binding to the receptor results in the rapid tyrosine phosphorylation of a number of cellular substrates including the JAK family kinases TYK2 and JAK2. In turn, recruited STAT4 gets phosphorylated and translocates to the nucleus where it regulates cytokine/growth factor responsive genes. As part of IL-35, plays essential roles in maintaining the immune homeostasis of the liver microenvironment and also functions as an immune-suppressive cytokine. Mediates biological events through unconventional receptors composed of IL12RB2 and gp130/IL6ST heterodimers or homodimers. Signaling requires the transcription factors STAT1 and STAT4, which form a unique heterodimer that binds to distinct DNA sites. The polypeptide is Interleukin-12 subunit alpha (IL12A) (Capra hircus (Goat)).